A 247-amino-acid chain; its full sequence is Probable proteasome subunit alpha type-5 (247 aa).

A Phosphothreonine modification is found at threonine 55.

Belongs to the peptidase T1A family. As to quaternary structure, the 26S proteasome consists of a 20S proteasome core and two 19S regulatory subunits. The 20S proteasome core is composed of 28 subunits that are arranged in four stacked rings, resulting in a barrel-shaped structure. The two end rings are each formed by seven alpha subunits, and the two central rings are each formed by seven beta subunits. The catalytic chamber with the active sites is on the inside of the barrel.

The protein localises to the cytoplasm. The protein resides in the nucleus. In terms of biological role, the proteasome is a multicatalytic proteinase complex which is characterized by its ability to cleave peptides with Arg, Phe, Tyr, Leu, and Glu adjacent to the leaving group at neutral or slightly basic pH. The proteasome has an ATP-dependent proteolytic activity. The polypeptide is Probable proteasome subunit alpha type-5 (pup2) (Schizosaccharomyces pombe (strain 972 / ATCC 24843) (Fission yeast)).